We begin with the raw amino-acid sequence, 655 residues long: Bifunctional lysine-specific demethylase and histidyl-hydroxylase NO66 (655 aa).

The segment covering 1 to 16 (MEKVTNSAAAKPQGNN) has biased composition (polar residues). 2 disordered regions span residues 1–48 (MEKV…LSDM) and 67–122 (EDTD…QGAS). A compositionally biased stretch (low complexity) spans 76–86 (STSSKEAAAAK). A compositionally biased stretch (basic and acidic residues) spans 87–96 (TADHERRLQA). Residue serine 131 is modified to Phosphoserine. At threonine 137 the chain carries Phosphothreonine. At serine 138 the chain carries Phosphoserine. The segment at 185-210 (KAPEEGNNNNDEKEMSTETSEPHKTD) is disordered. The span at 194 to 210 (NDEKEMSTETSEPHKTD) shows a compositional bias: basic and acidic residues. Positions 307–452 (CSIRLLHASA…NLLETLMPMV (146 aa)) constitute a JmjC domain. Fe cation-binding residues include histidine 353, aspartate 355, and histidine 418.

The protein belongs to the ROX family. NO66 subfamily. Fe(2+) serves as cofactor.

It is found in the nucleus. It carries out the reaction N(6),N(6)-dimethyl-L-lysyl(36)-[histone H3] + 2 2-oxoglutarate + 2 O2 = L-lysyl(36)-[histone H3] + 2 formaldehyde + 2 succinate + 2 CO2. Its function is as follows. Oxygenase that can act as both a histone lysine demethylase and a ribosomal histidine hydroxylase. Specifically demethylates 'Lys-4' (H3K4me) and 'Lys-36' (H3K36me) of histone H3, thereby playing a central role in histone code. The chain is Bifunctional lysine-specific demethylase and histidyl-hydroxylase NO66 from Drosophila sechellia (Fruit fly).